Here is a 318-residue protein sequence, read N- to C-terminus: MGRYCGLVNDTSPSRYVVVVTHATRDDAFDAAAEFISEMAGRDIGCAVPDDQAKPMSSKLPGIDLESLGEFAHEAEVVVVFGGDGTILRAAEWSLPRHVPMIGVNLGHVGFLAELERSDMADLVNKVCSRDYTVEDRLVLKTTVTEHSGQHRWSSFAVNELSLEKAARRRMLDVLASVDELPVQRWSCDGILVSTPTGSTAYAFSAGGPVMWPDLDAMLMVPLSAHALFARPLVMSPAARVDLDIQPDGSESAVLWCDGRRSCTVRPGERITVVRHPDRLRIARLAAQPFTSRLVKKFELPVSGWRQGRDRHHLEETS.

Residue Asp84 is the Proton acceptor of the active site. Residues 84–85 (DG), Arg89, 159–160 (NE), Arg170, Asp189, and 200–205 (TAYAFS) each bind NAD(+).

Belongs to the NAD kinase family. It depends on a divalent metal cation as a cofactor.

The protein resides in the cytoplasm. The catalysed reaction is NAD(+) + ATP = ADP + NADP(+) + H(+). Involved in the regulation of the intracellular balance of NAD and NADP, and is a key enzyme in the biosynthesis of NADP. Catalyzes specifically the phosphorylation on 2'-hydroxyl of the adenosine moiety of NAD to yield NADP. This Cutibacterium acnes (strain DSM 16379 / KPA171202) (Propionibacterium acnes) protein is NAD kinase.